We begin with the raw amino-acid sequence, 392 residues long: Protein FAM53C (392 aa).

The residue at position 1 (Met-1) is an N-acetylmethionine. The disordered stretch occupies residues 77-120 (HLRPPSRGSSPKEQPLSQVLRPEPPDPEKLPVPPAPPSKRHCRS). Residues 83–93 (RGSSPKEQPLS) show a composition bias toward polar residues. Ser-122 and Ser-162 each carry phosphoserine. 3 disordered regions span residues 141–167 (LWTP…PKRV), 203–303 (SRPC…LDFD), and 340–364 (SASC…EGAV). The span at 203–215 (SRPCATSPQSGSW) shows a compositional bias: polar residues. A phosphoserine mark is found at Ser-232, Ser-234, Ser-255, Ser-273, and Ser-299. Low complexity predominate over residues 241-256 (ASRFLPSARSSPASSP). Positions 278–303 (LDARKTGVKRRHEEDPRRLRPSLDFD) are enriched in basic and acidic residues.

It belongs to the FAM53 family.

In Pongo abelii (Sumatran orangutan), this protein is Protein FAM53C.